The following is a 375-amino-acid chain: Probable serine/threonine-protein kinase PBL28 (375 aa).

Thr-65 bears the Phosphothreonine mark. Residues 76–356 (FSDENLLGKG…MDCVKELQLI (281 aa)) form the Protein kinase domain. Residues 82–90 (LGKGGFGRV) and Lys-104 contribute to the ATP site. Position 152 is a phosphotyrosine (Tyr-152). Catalysis depends on Asp-205, which acts as the Proton acceptor. Thr-245 is modified (phosphothreonine). Tyr-253 is modified (phosphotyrosine).

The protein belongs to the protein kinase superfamily. Ser/Thr protein kinase family.

The protein localises to the cell membrane. The catalysed reaction is L-seryl-[protein] + ATP = O-phospho-L-seryl-[protein] + ADP + H(+). It catalyses the reaction L-threonyl-[protein] + ATP = O-phospho-L-threonyl-[protein] + ADP + H(+). May be involved in plant defense signaling. This is Probable serine/threonine-protein kinase PBL28 from Arabidopsis thaliana (Mouse-ear cress).